Reading from the N-terminus, the 261-residue chain is Glucosamine-6-phosphate deaminase (261 aa).

Aspartate 67 serves as the catalytic Proton acceptor; for enolization step. Asparagine 136 (for ring-opening step) is an active-site residue. Catalysis depends on histidine 138, which acts as the Proton acceptor; for ring-opening step. Glutamate 143 serves as the catalytic For ring-opening step.

This sequence belongs to the glucosamine/galactosamine-6-phosphate isomerase family. NagB subfamily.

The enzyme catalyses alpha-D-glucosamine 6-phosphate + H2O = beta-D-fructose 6-phosphate + NH4(+). It functions in the pathway amino-sugar metabolism; N-acetylneuraminate degradation; D-fructose 6-phosphate from N-acetylneuraminate: step 5/5. In terms of biological role, catalyzes the reversible isomerization-deamination of glucosamine 6-phosphate (GlcN6P) to form fructose 6-phosphate (Fru6P) and ammonium ion. This chain is Glucosamine-6-phosphate deaminase, found in Cutibacterium acnes (strain DSM 16379 / KPA171202) (Propionibacterium acnes).